Consider the following 469-residue polypeptide: Glutamate--tRNA ligase (469 aa).

A 'HIGH' region motif is present at residues 9 to 19; that stretch reads PSPTGFLHVGG. Residues Cys-98, Cys-100, Cys-125, and Asp-127 each contribute to the Zn(2+) site. The 'KMSKS' region signature appears at 236–240; it reads KLSKR. Lys-239 contacts ATP.

It belongs to the class-I aminoacyl-tRNA synthetase family. Glutamate--tRNA ligase type 1 subfamily. Monomer. Zn(2+) is required as a cofactor.

The protein resides in the cytoplasm. The catalysed reaction is tRNA(Glu) + L-glutamate + ATP = L-glutamyl-tRNA(Glu) + AMP + diphosphate. Functionally, catalyzes the attachment of glutamate to tRNA(Glu) in a two-step reaction: glutamate is first activated by ATP to form Glu-AMP and then transferred to the acceptor end of tRNA(Glu). The polypeptide is Glutamate--tRNA ligase (Shewanella sp. (strain ANA-3)).